Consider the following 372-residue polypeptide: NAD(P)H-quinone oxidoreductase subunit 1 (372 aa).

The next 9 helical transmembrane spans lie at 27-47, 65-85, 97-117, 128-148, 166-186, 204-224, 266-286, 308-328, and 347-367; these read AIWM…GVLV, PEYI…KLVF, WLFT…YLIV, IGTG…GLLM, AAQS…IVMM, ILGW…IAAL, VLSA…PIPI, ALGI…AILL, and FLLP…LAFP.

It belongs to the complex I subunit 1 family. In terms of assembly, NDH-1 is composed of at least 11 different subunits.

It is found in the cellular thylakoid membrane. It carries out the reaction a plastoquinone + NADH + (n+1) H(+)(in) = a plastoquinol + NAD(+) + n H(+)(out). The catalysed reaction is a plastoquinone + NADPH + (n+1) H(+)(in) = a plastoquinol + NADP(+) + n H(+)(out). Its function is as follows. NDH-1 shuttles electrons from an unknown electron donor, via FMN and iron-sulfur (Fe-S) centers, to quinones in the respiratory and/or the photosynthetic chain. The immediate electron acceptor for the enzyme in this species is believed to be plastoquinone. Couples the redox reaction to proton translocation, and thus conserves the redox energy in a proton gradient. The protein is NAD(P)H-quinone oxidoreductase subunit 1 of Trichormus variabilis (strain ATCC 29413 / PCC 7937) (Anabaena variabilis).